Here is a 344-residue protein sequence, read N- to C-terminus: Arginine N-succinyltransferase (344 aa).

Leu125 is a binding site for succinyl-CoA. The active-site Proton donor is His229.

The protein belongs to the arginine N-succinyltransferase family.

The catalysed reaction is succinyl-CoA + L-arginine = N(2)-succinyl-L-arginine + CoA + H(+). It participates in amino-acid degradation; L-arginine degradation via AST pathway; L-glutamate and succinate from L-arginine: step 1/5. In terms of biological role, catalyzes the transfer of succinyl-CoA to arginine to produce N(2)-succinylarginine. This Shigella flexneri serotype 5b (strain 8401) protein is Arginine N-succinyltransferase.